Here is a 212-residue protein sequence, read N- to C-terminus: Penicillin-binding protein activator LpoB (212 aa).

The signal sequence occupies residues 1-19 (MTKMHRYAAIAALAIFLSG). Cys20 carries the N-palmitoyl cysteine lipid modification. Cys20 carries the S-diacylglycerol cysteine lipid modification. The disordered stretch occupies residues 28 to 73 (PVEEVKPAPEQPAQPPQPPVVPSVPTIPQQPGPIEHEDQTGQPAPK). Residues 36-49 (PEQPAQPPQPPVVP) show a composition bias toward pro residues.

This sequence belongs to the LpoB family. Interacts with PBP1b.

The protein resides in the cell outer membrane. Its function is as follows. Regulator of peptidoglycan synthesis that is essential for the function of penicillin-binding protein 1B (PBP1b). The protein is Penicillin-binding protein activator LpoB of Salmonella typhimurium (strain LT2 / SGSC1412 / ATCC 700720).